Here is an 824-residue protein sequence, read N- to C-terminus: Disintegrin and metalloproteinase domain-containing protein 17 (824 aa).

Residues 1–17 form the signal peptide; it reads MRQSLLFLTSVVPFVLA. The propeptide occupies 18 to 214; the sequence is PRPPDDPGFG…PEELVHRVKR (197 aa). 3 N-linked (GlcNAc...) asparagine glycosylation sites follow: N103, N157, and N174. Positions 182–189 match the Cysteine switch motif; sequence KVCGYLKV. Zn(2+) is bound at residue C184. The Extracellular portion of the chain corresponds to 215 to 671; the sequence is RADPDPMKNT…NTFGKFLADN (457 aa). The Peptidase M12B domain occupies 223 to 474; it reads NTCKLLVVAD…KAQECFQERS (252 aa). Intrachain disulfides connect C225–C333, C365–C469, and C423–C453. The N-linked (GlcNAc...) asparagine glycan is linked to N264. H405 lines the Zn(2+) pocket. The active site involves E406. Positions 409 and 415 each coordinate Zn(2+). N-linked (GlcNAc...) asparagine glycans are attached at residues N452, N498, N539, and N551. In terms of domain architecture, Disintegrin spans 475–563; the sequence is NKVCGNSRVD…ECPPPGNAED (89 aa). 4 cysteine pairs are disulfide-bonded: C534-C555, C573-C582, C578-C591, and C593-C600. An N-linked (GlcNAc...) asparagine glycan is attached at N594. The interval 603-671 is crambin-like; that stretch reads CCRDLSGRCV…NTFGKFLADN (69 aa). The helical transmembrane segment at 672–692 threads the bilayer; it reads IVGSVLVFSLIFWIPFSILVH. The Cytoplasmic segment spans residues 693–824; sequence CVDKKLDKQY…NRVDSKETEC (132 aa). 2 consecutive short sequence motifs (SH3-binding) follow at residues 731–738 and 741–748; these read PAPQTPGR and PAPVIPSA. A disordered region spans residues 732–824; it reads APQTPGRLQP…NRVDSKETEC (93 aa). A Phosphothreonine; by MAPK14 modification is found at T735. Residues 741 to 752 show a composition bias toward low complexity; it reads PAPVIPSAPAAP. T761 bears the Phosphothreonine mark. S767 bears the Phosphoserine mark. Composition is skewed to basic and acidic residues over residues 768 to 781, 791 to 807, and 815 to 824; these read TDSH…EKDP, SFED…EKAA, and NRVDSKETEC. Phosphoserine occurs at positions 791 and 819.

As to quaternary structure, interacts with MAD2L1, MAPK14 and MUC1. Interacts with iRhom1/RHBDF1 and iRhom2/RHBDF2. Interacts with FRMD8 via its interaction with iRhom1/RHBDF1 and iRhom2/RHBDF2. Interacts with TSPAN8. It depends on Zn(2+) as a cofactor. The precursor is cleaved by a furin endopeptidase. Post-translationally, phosphorylated. Stimulation by growth factor or phorbol 12-myristate 13-acetate induces phosphorylation of Ser-819 but decreases phosphorylation of Ser-791. Phosphorylation at Thr-735 by MAPK14 is required for ADAM17-mediated ectodomain shedding. As to expression, ubiquitously expressed. Expressed at highest levels in adult heart, placenta, skeletal muscle, pancreas, spleen, thymus, prostate, testes, ovary and small intestine, and in fetal brain, lung, liver and kidney. Expressed in natural killer cells (at protein level).

Its subcellular location is the cell membrane. It carries out the reaction Narrow endopeptidase specificity. Cleaves Pro-Leu-Ala-Gln-Ala-|-Val-Arg-Ser-Ser-Ser in the membrane-bound, 26-kDa form of tumor necrosis factor alpha (TNFalpha). Similarly cleaves other membrane-anchored, cell-surface proteins to 'shed' the extracellular domains.. Its function is as follows. Transmembrane metalloprotease which mediates the ectodomain shedding of a myriad of transmembrane proteins including adhesion proteins, growth factor precursors and cytokines important for inflammation and immunity. Cleaves the membrane-bound precursor of TNF-alpha to its mature soluble form. Responsible for the proteolytical release of soluble JAM3 from endothelial cells surface. Responsible for the proteolytic release of several other cell-surface proteins, including p75 TNF-receptor, interleukin 1 receptor type II, p55 TNF-receptor, transforming growth factor-alpha, L-selectin, growth hormone receptor, MUC1 and the amyloid precursor protein. Acts as an activator of Notch pathway by mediating cleavage of Notch, generating the membrane-associated intermediate fragment called Notch extracellular truncation (NEXT). Plays a role in the proteolytic processing of ACE2. Plays a role in hemostasis through shedding of GP1BA, the platelet glycoprotein Ib alpha chain. Mediates the proteolytic cleavage of LAG3, leading to release the secreted form of LAG3. Mediates the proteolytic cleavage of IL6R, leading to the release of secreted form of IL6R. Mediates the proteolytic cleavage and shedding of FCGR3A upon NK cell stimulation, a mechanism that allows for increased NK cell motility and detachment from opsonized target cells. Cleaves TREM2, resulting in shedding of the TREM2 ectodomain. The protein is Disintegrin and metalloproteinase domain-containing protein 17 of Homo sapiens (Human).